Reading from the N-terminus, the 79-residue chain is Secretory calcium-binding phosphoprotein proline-glutamine rich 1 (79 aa).

A signal peptide spans 1–15; the sequence is MKFLILAGLLSTATA.

The protein resides in the secreted. Functionally, tooth-associated epithelia protein that may participate in structuring the basal lamina at cell-tooth interface. This is Secretory calcium-binding phosphoprotein proline-glutamine rich 1 from Homo sapiens (Human).